The primary structure comprises 1088 residues: MASPTDPQAQENFSDVRKVGYLRKPKSMHKRFFVLRAASESSLARLEYYENEKKWRHKSGAPKRSIPLESCFNINKRADSKNKHLVALYTKDECFAIAAECEQEQEGWYQALVDLHNRGKTHHQHHNHDGAVNGVHDGLNGDEVYGEVTPPGLAFKEVWQVIMKPKGLGQLKNLVGIYRLCLTNRTISLVKLNSDAAAVVLQLMNIRRCGHSENFFFIEVGRSAVTGAGEFWMQVDDSVVAQNMHETILEAMKALSDEFRPRSKSQSSSNCSNPISVPLRRHHLNHPPPSQVGLNRRARTESATATSPAGGAAKHGSSSFRVRASSDGEGTMSRPASMEGSPVSPSASRTQSHRHRGSSRLHPPLNHSRSIPMPATRCSPSATSPVSLSSSSTSGHGSTSDCMCPRRSSASISGSPSDGGFISSDEYGSSPCDFRSSFRSVTPDSMGHTPPAREEELNNYICMGKSSSHLQRGPQQRYQPSRGEELTDFDKVFRKRTHSSGTSPPTVSHQKTPSQSSIEEYTEMMPTHPVRLTSFRHSAFVPTYSYPEECLDLHLEGSRANHKDDGYMPMSPGVAPVSTKTNDYMPMSPKSVSAPQQIINPRWHSAVDSNGYMMMSPSGSCSPDNTNYSKIWTNGTNPKLSIDSIEGKLPCSDYINMSPASGSTTSTPPDSYLNSVEESTKPVYSYFSLPRSFKHVHRKSEDGNLRISANSGHNLYTEDSSSSSTSSDSLGGQDPQQPRKGEGCIQGKRLTRPTRLSLENSSKASTLPRVREPALPPEPKSPGEYVNIEFNDKVFSGGLVPSMCSLPFVQSRVVPQRENLSEYMNMDLGVWRAKTSYASTSSYEPPNKPVNSVCPTETCSSSRPPIRGKPISRDYMSMQLGSLCPDYSQVPPTRLSAKSITLSSSKSNYAEMSSGRVSDNIPAIAPASNSSLSEASRSSLLGQGSGPSAFTRVSLSPNRNPSAKVIRAGDPQGRRRHSSETFSSTPTTARVTTGPVSGEDVKRHSSASFENVWLRPGEIARRDSLQPSDHTHNGLNYIDLDLAKDLSSLDHCNSHQSGVSHPSDDLSPYASITFHKLEEHRSQAETEE.

Residues 15–117 (DVRKVGYLRK…WYQALVDLHN (103 aa)) form the PH domain. The residue at position 48 (Y48) is a Phosphotyrosine. The IRS-type PTB domain maps to 155 to 259 (FKEVWQVIMK…EAMKALSDEF (105 aa)). The segment at 259-428 (FRPRSKSQSS…GGFISSDEYG (170 aa)) is disordered. Composition is skewed to low complexity over residues 264–278 (KSQS…ISVP), 302–312 (SATATSPAGGA), 379–400 (SPSA…GSTS), and 408–420 (SSAS…SDGG). S307 is modified (phosphoserine). At Y460 the chain carries Phosphotyrosine; by INSR. Residues 460–463 (YICM) carry the YXXM motif 1 motif. Polar residues-rich tracts occupy residues 466–479 (SSSH…QRYQ) and 499–516 (SSGT…PSQS). Disordered stretches follow at residues 466–485 (SSSH…RGEE) and 496–516 (RTHS…PSQS). 5 consecutive short sequence motifs (YXXM motif) follow at residues 521-524 (YTEM), 567-570 (YMPM), 584-587 (YMPM), 612-615 (YMMM), and 654-657 (YINM). Y567 and Y584 each carry phosphotyrosine; by INSR. A Phosphotyrosine modification is found at Y612. Residues 704-785 (NLRISANSGH…PPEPKSPGEY (82 aa)) are disordered. Residues 707–718 (ISANSGHNLYTE) are compositionally biased toward polar residues. The span at 719 to 729 (DSSSSSTSSDS) shows a compositional bias: low complexity. Phosphotyrosine; by INSR occurs at positions 785 and 823. The GRB2-binding stretch occupies residues 785–787 (YVN). The short motif at 823-826 (YMNM) is the YXXM motif 7 element. Polar residues predominate over residues 840–863 (TSSYEPPNKPVNSVCPTETCSSSR). Residues 840 to 868 (TSSYEPPNKPVNSVCPTETCSSSRPPIRG) form a disordered region. Y875 is subject to Phosphotyrosine; by INSR. Short sequence motifs (YXXM motif) lie at residues 875 to 878 (YMSM) and 909 to 912 (YAEM). Positions 935-1006 (ASRSSLLGQG…SGEDVKRHSS (72 aa)) are disordered. 2 stretches are compositionally biased toward polar residues: residues 946–961 (GPSA…NRNP) and 980–995 (ETFS…TTGP). Phosphotyrosine; by INSR occurs at positions 1037 and 1069.

As to quaternary structure, interacts with the NPXY motif of tyrosine-phosphorylated igf1r and insr via the PTB domain. Binds to phosphatidylinositol 3-kinase p85 subunit at a low level in vitro prior to phosphorylation. Binding is greatly enhanced following tyrosine phosphorylation by insr and probably occurs via the phosphorylated YXXM motifs. Phosphorylation of Tyr-785 is required for grb2-binding.

Functionally, may mediate the control of various cellular processes by insulin. When phosphorylated by the insulin receptor binds specifically to various cellular proteins containing SH2 domains such as phosphatidylinositol 3-kinase p85 subunit or grb2. Activates phosphatidylinositol 3-kinase when bound to the regulatory p85 subunit. The chain is Insulin receptor substrate 1-B (irs1-b) from Xenopus laevis (African clawed frog).